The sequence spans 533 residues: Lysine--tRNA ligase (533 aa).

The 'HIGH' region motif lies at 28–36 (PSGHIHIGN). Positions 278–282 (PMSSS) match the 'KMSKS' region motif.

This sequence belongs to the class-I aminoacyl-tRNA synthetase family.

Its subcellular location is the cytoplasm. The catalysed reaction is tRNA(Lys) + L-lysine + ATP = L-lysyl-tRNA(Lys) + AMP + diphosphate. This Methanococcus maripaludis (strain DSM 14266 / JCM 13030 / NBRC 101832 / S2 / LL) protein is Lysine--tRNA ligase (lysS).